Reading from the N-terminus, the 461-residue chain is Peptidyl-prolyl cis-trans isomerase-like 4 (461 aa).

The PPIase cyclophilin-type domain maps to 1 to 171 (MSVLLETSLG…KDIRIRHTVI (171 aa)). Residues 248-326 (NVLFVCKLNP…HRIHVDFSQS (79 aa)) enclose the RRM domain. Residues 372-461 (NYNMVFDKND…DDRYRDRRRR (90 aa)) form a disordered region. 2 stretches are compositionally biased toward basic and acidic residues: residues 378–392 (DKND…ERSY) and 400–461 (NYRD…RRRR).

The protein belongs to the cyclophilin-type PPIase family. PPIL4 subfamily.

The protein resides in the nucleus. It catalyses the reaction [protein]-peptidylproline (omega=180) = [protein]-peptidylproline (omega=0). In terms of biological role, PPIases accelerate the folding of proteins. It catalyzes the cis-trans isomerization of proline imidic peptide bonds in oligopeptides. The protein is Peptidyl-prolyl cis-trans isomerase-like 4 (cyp6) of Emericella nidulans (strain FGSC A4 / ATCC 38163 / CBS 112.46 / NRRL 194 / M139) (Aspergillus nidulans).